A 1322-amino-acid chain; its full sequence is Flocculation protein FLO9 (1322 aa).

Positions 1-24 (MSLAHYCLLLAIVTLLGLTNVVSA) are cleaved as a signal peptide. One can recognise a PA14 domain in the interval 74-249 (GGQTDISIDY…GTTVSDDFEG (176 aa)). N-linked (GlcNAc...) asparagine glycosylation is found at Asn-135, Asn-187, Asn-203, Asn-257, Asn-262, and Asn-270. The segment at 197–240 (NGSPPDNITGTVYMYAGFYYPMKIVYSNAVAWGTLPISVTLPDG) is sugar recognition. Repeat copies occupy residues 278–322 (TTTE…STII), 323–367 (TTTE…TTAI), 368–412 (TTTE…TTAM), 413–457 (TTTQ…TTAM), 458–502 (TTTQ…TTAM), 503–547 (TTTQ…TTAM), 548–592 (TTTQ…TTAI), 593–637 (TTTE…TTAI), 638–682 (TTTQ…TTAM), 683–727 (TTTQ…TTAM), 728–772 (TTTQ…GLIS), 773–817 (TTTE…GLVT), and 818–862 (TTTE…ISSS). The 13 X 45 AA approximate tandem repeats, Thr-rich stretch occupies residues 278-862 (TTTEPWTGTF…KTPTTAISSS (585 aa)). N-linked (GlcNAc...) asparagine glycosylation is present at Asn-329. 8 N-linked (GlcNAc...) asparagine glycosylation sites follow: Asn-419, Asn-464, Asn-509, Asn-554, Asn-599, Asn-644, Asn-689, and Asn-734. 2 disordered regions span residues 770–799 (LIST…NGQP) and 816–843 (VTTT…TNGQ). 2 stretches are compositionally biased toward low complexity: residues 773–795 (TTTE…VTGT) and 817–840 (TTTT…ITGT). An N-linked (GlcNAc...) asparagine glycan is attached at Asn-888. Repeat copies occupy residues 892–906 (VISS…TSSL), 907–921 (VISS…TSSP), and 922–936 (VISS…ISST). The tract at residues 892–936 (VISSSVISSSDTSSLVISSSVTSSLVTSSPVISSSFISSPVISST) is 3 X 15 AA approximate repeats, Ser-rich. Positions 950–1001 (SVIPTSSSTSGSSESETGSASSASSSSSISSESPKSTYSSSSLPPVTSATTS) are enriched in low complexity. The tract at residues 950-1018 (SVIPTSSSTS…PPVTTTKTSE (69 aa)) is disordered. The span at 1002–1018 (QEITSSLPPVTTTKTSE) shows a compositional bias: polar residues. 3 tandem repeats follow at residues 1013–1063 (TTKT…CPIS), 1085–1135 (TTET…CPIS), and 1136–1186 (TTES…RPQT). Residues 1013 to 1186 (TTKTSEQTTL…TVYSTWRPQT (174 aa)) form a 3 X 51 AA approximate repeats, Thr-rich region. Residues 1186–1196 (TTNEQSVSSKM) are compositionally biased toward polar residues. Disordered stretches follow at residues 1186-1221 (TTNE…AAET) and 1256-1284 (SETG…ASSM). Residues 1197 to 1221 (NSATSETTTNTGAAETTTSTGAAET) are compositionally biased toward low complexity. Polar residues predominate over residues 1257-1284 (ETGNTKSLTSSGLSTMSQQPRSTPASSM). Residue Gly-1299 is the site of GPI-anchor amidated glycine attachment. Residues 1300–1322 (SANSLLAGSGLSVFIASLLLAII) constitute a propeptide, removed in mature form.

The protein belongs to the flocculin family. In terms of processing, the GPI-anchor is attached to the protein in the endoplasmic reticulum and serves to target the protein to the cell surface. There, the glucosamine-inositol phospholipid moiety is cleaved off and the GPI-modified mannoprotein is covalently attached via its lipidless GPI glycan remnant to the 1,6-beta-glucan of the outer cell wall layer.

It localises to the secreted. The protein localises to the cell wall. It is found in the membrane. Its function is as follows. Cell wall protein that participates directly in adhesive cell-cell interactions during yeast flocculation, a reversible, asexual and Ca(2+)-dependent process in which cells adhere to form aggregates (flocs) consisting of thousands of cells. The lectin-like protein sticks out of the cell wall of flocculent cells and selectively binds mannose residues in the cell walls of adjacent cells. This is Flocculation protein FLO9 (FLO9) from Saccharomyces cerevisiae (strain ATCC 204508 / S288c) (Baker's yeast).